The primary structure comprises 409 residues: 4-diphosphocytidyl-2-C-methyl-D-erythritol kinase (409 aa).

Residues 1–22 (MKTDGGNTWRASHSKPLNTANT) are compositionally biased toward polar residues. The tract at residues 1-26 (MKTDGGNTWRASHSKPLNTANTMGEP) is disordered. An ATP-binding site is contributed by 201–211 (PVAAGLAGGSA). Asp243 is an active-site residue.

Belongs to the GHMP kinase family. IspE subfamily.

The enzyme catalyses 4-CDP-2-C-methyl-D-erythritol + ATP = 4-CDP-2-C-methyl-D-erythritol 2-phosphate + ADP + H(+). Its pathway is isoprenoid biosynthesis; isopentenyl diphosphate biosynthesis via DXP pathway; isopentenyl diphosphate from 1-deoxy-D-xylulose 5-phosphate: step 3/6. Catalyzes the phosphorylation of the position 2 hydroxy group of 4-diphosphocytidyl-2C-methyl-D-erythritol. The chain is 4-diphosphocytidyl-2-C-methyl-D-erythritol kinase (ispE) from Tropheryma whipplei (strain Twist) (Whipple's bacillus).